We begin with the raw amino-acid sequence, 69 residues long: Large ribosomal subunit protein bL31 (69 aa).

Zn(2+)-binding residues include Cys-17, Cys-19, Cys-37, and Cys-40.

It belongs to the bacterial ribosomal protein bL31 family. Type A subfamily. Part of the 50S ribosomal subunit. The cofactor is Zn(2+).

Its function is as follows. Binds the 23S rRNA. This Clostridium novyi (strain NT) protein is Large ribosomal subunit protein bL31.